The following is a 485-amino-acid chain: Aspartyl/glutamyl-tRNA(Asn/Gln) amidotransferase subunit B (485 aa).

The protein belongs to the GatB/GatE family. GatB subfamily. Heterotrimer of A, B and C subunits.

The enzyme catalyses L-glutamyl-tRNA(Gln) + L-glutamine + ATP + H2O = L-glutaminyl-tRNA(Gln) + L-glutamate + ADP + phosphate + H(+). It catalyses the reaction L-aspartyl-tRNA(Asn) + L-glutamine + ATP + H2O = L-asparaginyl-tRNA(Asn) + L-glutamate + ADP + phosphate + 2 H(+). Allows the formation of correctly charged Asn-tRNA(Asn) or Gln-tRNA(Gln) through the transamidation of misacylated Asp-tRNA(Asn) or Glu-tRNA(Gln) in organisms which lack either or both of asparaginyl-tRNA or glutaminyl-tRNA synthetases. The reaction takes place in the presence of glutamine and ATP through an activated phospho-Asp-tRNA(Asn) or phospho-Glu-tRNA(Gln). This chain is Aspartyl/glutamyl-tRNA(Asn/Gln) amidotransferase subunit B, found in Gluconobacter oxydans (strain 621H) (Gluconobacter suboxydans).